A 320-amino-acid chain; its full sequence is Cytochrome f (320 aa).

A signal peptide spans 1–35; sequence MQTRNAFSCIKEGITRSISISVMIYIIIRAPFSNA. Y36, C56, C59, and H60 together coordinate heme. Residues 286-306 traverse the membrane as a helical segment; it reads VQGLLFFLASIILAQIFLVLK.

It belongs to the cytochrome f family. In terms of assembly, the 4 large subunits of the cytochrome b6-f complex are cytochrome b6, subunit IV (17 kDa polypeptide, petD), cytochrome f and the Rieske protein, while the 4 small subunits are PetG, PetL, PetM and PetN. The complex functions as a dimer. Heme serves as cofactor.

It is found in the plastid. The protein localises to the chloroplast thylakoid membrane. Component of the cytochrome b6-f complex, which mediates electron transfer between photosystem II (PSII) and photosystem I (PSI), cyclic electron flow around PSI, and state transitions. This chain is Cytochrome f, found in Phaseolus vulgaris (Kidney bean).